The primary structure comprises 496 residues: Beta-amylase (496 aa).

Substrate-binding residues include D54, H94, and D102. The active-site Proton donor is E187. Substrate contacts are provided by K296, H301, and T343. Catalysis depends on E381, which acts as the Proton acceptor. Residues 382 to 383 (NA) and R421 contribute to the substrate site.

Belongs to the glycosyl hydrolase 14 family.

It carries out the reaction Hydrolysis of (1-&gt;4)-alpha-D-glucosidic linkages in polysaccharides so as to remove successive maltose units from the non-reducing ends of the chains.. This chain is Beta-amylase (BMY1), found in Trifolium repens (Creeping white clover).